We begin with the raw amino-acid sequence, 169 residues long: MTAGRRMEMLCAGRVPALLLCLGFHLLQAVLSTTVIPSCIPGESSDNCTALVQTEDNPRVAQVSITKCSSDMNGYCLHGQCIYLVDMSQNYCRCEVGYTGVRCEHFFLTVHQPLSKEYVALTVILIILFLITVVGSTYYFCRWYRNRKSKEPKKEYERVTSGDPELPQV.

The N-terminal stretch at 1–29 is a signal peptide; it reads MTAGRRMEMLCAGRVPALLLCLGFHLLQA. The propeptide occupies 30–62; that stretch reads VLSTTVIPSCIPGESSDNCTALVQTEDNPRVAQ. N-linked (GlcNAc...) asparagine glycosylation is present at Asn-47. Over 60 to 119 the chain is Extracellular; it reads VAQVSITKCSSDMNGYCLHGQCIYLVDMSQNYCRCEVGYTGVRCEHFFLTVHQPLSKEYV. The 41-residue stretch at 64 to 104 folds into the EGF-like domain; that stretch reads SITKCSSDMNGYCLHGQCIYLVDMSQNYCRCEVGYTGVRCE. 3 cysteine pairs are disulfide-bonded: Cys-68–Cys-81, Cys-76–Cys-92, and Cys-94–Cys-103. Positions 109–169 are cleaved as a propeptide — removed in mature form; sequence TVHQPLSKEY…TSGDPELPQV (61 aa). The helical transmembrane segment at 120–140 threads the bilayer; sequence ALTVILIILFLITVVGSTYYF. At 141–169 the chain is on the cytoplasmic side; it reads CRWYRNRKSKEPKKEYERVTSGDPELPQV.

In terms of assembly, interacts with EGFR and ERBB4. In normal adults, expressed predominantly in the placenta and peripheral blood leukocytes. High levels were detected in carcinomas of the bladder, lung, kidney and colon.

The protein resides in the secreted. It localises to the extracellular space. Its subcellular location is the cell membrane. Ligand of the EGF receptor/EGFR and ERBB4. Stimulates EGFR and ERBB4 tyrosine phosphorylation. Contributes to inflammation, wound healing, tissue repair, and oocyte maturation by regulating angiogenesis and vascular remodeling and by stimulating cell proliferation. In Homo sapiens (Human), this protein is Proepiregulin (EREG).